The following is a 356-amino-acid chain: Sterol-4-alpha-carboxylate 3-dehydrogenase, decarboxylating (356 aa).

An N-acetylmethionine modification is found at Met1. Tyr155 functions as the Proton acceptor in the catalytic mechanism. Lys159 serves as a coordination point for NAD(+). Residues 281-301 (WLAYYLALLVSLLVMVISPVI) traverse the membrane as a helical segment. The Prevents secretion from ER signature appears at 353–356 (RKVM).

It belongs to the 3-beta-HSD family. Homodimer.

Its subcellular location is the endoplasmic reticulum membrane. It is found in the lipid droplet. The catalysed reaction is a 3beta-hydroxysteroid-4alpha-carboxylate + NADP(+) = a 3-oxosteroid + CO2 + NADPH. It catalyses the reaction a 3beta-hydroxysteroid-4alpha-carboxylate + NAD(+) = a 3-oxosteroid + CO2 + NADH. It carries out the reaction 4alpha-carboxyzymosterol + NADP(+) = zymosterone + CO2 + NADPH. The enzyme catalyses 4alpha-carboxy-4beta-methyl-5alpha-cholest-8-en-3beta-ol + NADP(+) = 4alpha-methyl-5alpha-cholest-8-en-3-one + CO2 + NADPH. The catalysed reaction is 4alpha-carboxy-5alpha-cholest-8-ene-3beta-ol + NADP(+) = 5alpha-cholest-8-en-3-one + CO2 + NADPH. It catalyses the reaction 4beta-methylzymosterol-4alpha-carboxylate + NADP(+) = 3-dehydro-4-methylzymosterol + CO2 + NADPH. It carries out the reaction 4beta-methylzymosterol-4alpha-carboxylate + NAD(+) = 3-dehydro-4-methylzymosterol + CO2 + NADH. The enzyme catalyses 4alpha-carboxy-5alpha-cholest-8-ene-3beta-ol + NAD(+) = 5alpha-cholest-8-en-3-one + CO2 + NADH. The catalysed reaction is 4alpha-carboxy-4beta-methyl-5alpha-cholest-8-en-3beta-ol + NAD(+) = 4alpha-methyl-5alpha-cholest-8-en-3-one + CO2 + NADH. It catalyses the reaction 4alpha-carboxyzymosterol + NAD(+) = zymosterone + CO2 + NADH. The protein operates within steroid biosynthesis; zymosterol biosynthesis; zymosterol from lanosterol: step 4/6. In terms of biological role, catalyzes the NAD(P)(+)-dependent oxidative decarboxylation of the C4 methyl groups of 4-alpha-carboxysterols in post-squalene cholesterol biosynthesis. Also plays a role in the regulation of the endocytic trafficking of EGFR. This is Sterol-4-alpha-carboxylate 3-dehydrogenase, decarboxylating (NSDHL) from Bos taurus (Bovine).